A 466-amino-acid polypeptide reads, in one-letter code: Neuropeptide Y receptor type 5 (466 aa).

The Extracellular segment spans residues 1-63 (MEVKLEEHFN…YRGSVDDLQY (63 aa)). N-linked (GlcNAc...) asparagine glycans are attached at residues asparagine 10, asparagine 17, asparagine 38, and asparagine 39. A helical transmembrane segment spans residues 64–84 (FLIGLYTFVSLLGFMGNLLIL). Over 85 to 98 (MAVMKKRNQKTTVN) the chain is Cytoplasmic. The chain crosses the membrane as a helical span at residues 99-119 (FLIGNLAFSDILVVLFCSPFT). The Extracellular segment spans residues 120-138 (LTSVLLDQWMFGKAMCHIM). Cysteine 135 and cysteine 219 are oxidised to a cystine. Residues 139–159 (PFLQCVSVLVSTLILISIAIV) traverse the membrane as a helical segment. The Cytoplasmic portion of the chain corresponds to 160–177 (RYHMIKHPISNNLTANHG). Residues 178-198 (YFLIATVWTLGFAICSPLPVF) traverse the membrane as a helical segment. Over 199–229 (HSLVELKETFGSALLSSKYLCVESWPSDSYR) the chain is Extracellular. A helical transmembrane segment spans residues 230–250 (IAFTISLLLVQYILPLVCLTV). Over 251–389 (SHTSVCRSIS…KKRSRSVFYR (139 aa)) the chain is Cytoplasmic. The disordered stretch occupies residues 323–346 (GPSQEKHLTVPENPGSVRSQLSPS). A helical membrane pass occupies residues 390–410 (LTILILVFAVSWMPLHVFHVV). The Extracellular segment spans residues 411–427 (TDFNDNLISNRHFKLVY). A helical membrane pass occupies residues 428–448 (CICHLLGMMSCCLNPILYGFL). Topologically, residues 449-466 (NNGIKADLRALIHCLHMS) are cytoplasmic. Cysteine 462 carries the S-palmitoyl cysteine lipid modification.

Belongs to the G-protein coupled receptor 1 family.

Its subcellular location is the cell membrane. Receptor for neuropeptide Y and peptide YY. The activity of this receptor is mediated by G proteins that inhibit adenylate cyclase activity. Seems to be associated with food intake. Could be involved in feeding disorders. The polypeptide is Neuropeptide Y receptor type 5 (Npy5r) (Mus musculus (Mouse)).